The chain runs to 652 residues: DNA ligase (652 aa).

Residues 29 to 33, 78 to 79, and E107 contribute to the NAD(+) site; these read DSQYD and SL. K109 acts as the N6-AMP-lysine intermediate in catalysis. Positions 130, 164, 278, and 302 each coordinate NAD(+). Zn(2+) contacts are provided by C395, C398, C413, and C418. Positions 577–652 constitute a BRCT domain; it reads STDAQLSGLT…IQDEDWLLNL (76 aa).

It belongs to the NAD-dependent DNA ligase family. LigA subfamily. Requires Mg(2+) as cofactor. The cofactor is Mn(2+).

It carries out the reaction NAD(+) + (deoxyribonucleotide)n-3'-hydroxyl + 5'-phospho-(deoxyribonucleotide)m = (deoxyribonucleotide)n+m + AMP + beta-nicotinamide D-nucleotide.. Its function is as follows. DNA ligase that catalyzes the formation of phosphodiester linkages between 5'-phosphoryl and 3'-hydroxyl groups in double-stranded DNA using NAD as a coenzyme and as the energy source for the reaction. It is essential for DNA replication and repair of damaged DNA. The polypeptide is DNA ligase (Streptococcus agalactiae serotype V (strain ATCC BAA-611 / 2603 V/R)).